A 455-amino-acid polypeptide reads, in one-letter code: Indoleacetamide hydrolase (455 aa).

Active-site charge relay system residues include lysine 71 and serine 146. The active-site Acyl-ester intermediate is the serine 170.

This sequence belongs to the amidase family.

Its pathway is plant hormone metabolism; auxin biosynthesis. Its function is as follows. Hydrolyzes indole-3-acetamide (IAM) into indole-3-acetic acid (IAA). The polypeptide is Indoleacetamide hydrolase (iaaH) (Pseudomonas savastanoi (Pseudomonas syringae pv. savastanoi)).